Reading from the N-terminus, the 257-residue chain is AT-hook motif nuclear-localized protein 16 (257 aa).

A disordered region spans residues 1-71 (MAGGTALTPT…SKNKPKPPII (71 aa)). The segment at residues 53-65 (KRPRGRPAGSKNK) is a DNA-binding region (a.T hook). The 138-residue stretch at 77–214 (PNSLRANAVE…DEAASMQNQQ (138 aa)) folds into the PPC domain.

In terms of assembly, interacts with FVE/MSI4 and MSI5 which are components of HDAC corepressor complexes. In terms of tissue distribution, preferentially expressed in the inflorescence meristem and young floral buds, as well as in seedling-stage vegetative meristems. Widely expressed in flowers, roots and stems, with relatively low expression in leaves.

Its subcellular location is the nucleus. Transcription factor that specifically binds AT-rich DNA sequences related to the nuclear matrix attachment regions (MARs). Encodes a nuclear matrix protein that acts in the maintenance of genomic integrity by silencing TEs and repeat-containing genes through epigenetic machinery. Acts as a chromatin remodeling factor that modifies the architecture of FLC and FWA chromatin by modulating both H3 acetylation and methylation leading to the regulation of FLC and FWA expression. Negatively regulates floral repressors including MAF4 and MAF5. Plays a transcription activation role in anther development. Regulates the expression of arabinogalactan proteins (AGPs) involved in the formation of the nexine layer of the pollen wall. Binds AGP6, AGP11, AGP23 and AGP40 promoters. In Arabidopsis thaliana (Mouse-ear cress), this protein is AT-hook motif nuclear-localized protein 16.